The following is a 257-amino-acid chain: Phosphatidylglycerol--prolipoprotein diacylglyceryl transferase (257 aa).

The next 4 helical transmembrane spans lie at 8 to 28 (IFGL…ILAY), 48 to 68 (VFIV…VIFN), 84 to 104 (EGGL…YLMS), and 109 to 129 (LNFL…QAIG). Residue arginine 130 participates in a 1,2-diacyl-sn-glycero-3-phospho-(1'-sn-glycerol) binding. 3 helical membrane-spanning segments follow: residues 169–189 (PTFL…LLIT), 196–216 (GSIF…IEGL), and 225–245 (SLRM…ILII).

This sequence belongs to the Lgt family.

The protein localises to the cell membrane. It carries out the reaction L-cysteinyl-[prolipoprotein] + a 1,2-diacyl-sn-glycero-3-phospho-(1'-sn-glycerol) = an S-1,2-diacyl-sn-glyceryl-L-cysteinyl-[prolipoprotein] + sn-glycerol 1-phosphate + H(+). It functions in the pathway protein modification; lipoprotein biosynthesis (diacylglyceryl transfer). Functionally, catalyzes the transfer of the diacylglyceryl group from phosphatidylglycerol to the sulfhydryl group of the N-terminal cysteine of a prolipoprotein, the first step in the formation of mature lipoproteins. This is Phosphatidylglycerol--prolipoprotein diacylglyceryl transferase from Clostridium novyi (strain NT).